A 460-amino-acid chain; its full sequence is MSGINSRNQKMEQQRQLMEAYIRQKRASPGMVQASDLQINRPMSGMRSNSRELHAYDGPMQFISSPQNPDQILTNGSPGGINPVAMNTSRNHSNNMRSLSTINQEADLIEEISSHELEDEESSPVTVIEQHQQSASHSANSTQSQKPRARQHSFSDNLDEDDYTNRNVAGAAPVRPAGMASSPYKDATLDGSSNGTGNGTGGESEGDVIGNIDQFVMQPAPQGVLYKCRITRDRKGMDRGLFPIYYLHLERDYGKKIFLLGGRKRKKSKTSNYIVSCDPTDLSRNADGFCGKLRSNVFGTSFTVFDNGNKESTESPRLDLAVIIYDTNILGFKGPRNMTVILPGMTEDDQRVKISSADPKQQGILDLWKMKNMDNIVELHNKTPVWNDETQSYVLNFHGRVTQASVKNFQLVHDSDPEYIVMQFGRTSEDVFTMDYRYPLCAMQAFAIALSSFDGKIACE.

Disordered stretches follow at residues 75-97 (NGSP…NNMR) and 115-208 (HELE…EGDV). Positions 85–97 (AMNTSRNHSNNMR) are enriched in polar residues. The span at 130 to 145 (QHQQSASHSANSTQSQ) shows a compositional bias: low complexity. Phosphoserine is present on serine 153. Positions 194-203 (NGTGNGTGGE) are enriched in gly residues.

Belongs to the TUB family. In terms of tissue distribution, detected in sensory neurons which have a ciliary structure such as the chordotonal neurons, Orco-expressing olfactory receptor neurons, labellar gustatory receptor neurons and in the femoral chordotonal organ (at protein level). In the chordotonal neurons of the Johnston's organ expressed in the proximal to distal cilia, with lower levels of expression in the distal portion (at protein level). Also detected in the salivary glands and antenna (at protein level). Expressed in photoreceptor cells (at protein level). At stage 9 expression is detected in a subset of neuroblasts. By stage 12 expression is found in both the CNS and PNS. In late-stage embryos, expression persists in the CNS and PNS with more abundant expression in the antennal-maxillary sensory neurons and in bilateral groups of cells in the brain.

Its subcellular location is the cytoplasm. The protein resides in the nucleus. It is found in the cell projection. It localises to the cilium membrane. The protein localises to the rhabdomere. Functionally, functions in regulating protein trafficking, retinal maintenance and lipid storage. Protects photoreceptor cells R1 to R6 against light-induced retinal degeneration by stimulating norpA-mediated endocytosis of the rhodopsin ninaE (Rh1). In the auditory receptor neurons, functions as a cilia trafficking regulator of various transient receptor potential (TRP) channel components including iav and nompC. Likely to deliver pre-ciliary vesicles containing membrane proteins such as iav and nompC to the intraflagellar transport complex (IFT) at the cilia base. Plays a role in the inhibition of fat storage. This is Protein king tubby (ktub) from Drosophila melanogaster (Fruit fly).